A 373-amino-acid polypeptide reads, in one-letter code: CASP-like protein UU6 (373 aa).

Disordered regions lie at residues 1 to 100 and 172 to 195; these read MGTL…GSEG and TKET…PKKK. Residues 1–204 lie on the Cytoplasmic side of the membrane; sequence MGTLTDPTVD…KHRLRKHLTA (204 aa). Polar residues predominate over residues 56 to 74; it reads KTNTGNAAESTASTENGET. A helical membrane pass occupies residues 205-225; sequence IGAYSFAFRFSETVLSLIAIV. Topologically, residues 226–253 are extracellular; the sequence is VMCSTRGSMRTDGVDFGTLKFNHFQAYR. The helical transmembrane segment at 254 to 274 threads the bilayer; that stretch reads YLVAVNVIVFVYSTFQFIQLL. Over 275 to 276 the chain is Cytoplasmic; it reads YT. The helical transmembrane segment at 277 to 297 threads the bilayer; that stretch reads VILGISFIPSIFISTWMTFGF. The Extracellular segment spans residues 298 to 342; sequence DQLFLYLLLSASTSAATVANMSYTGEMGIQLCSRFDVGSFCSKAD. N-linked (GlcNAc...) asparagine glycosylation is present at N317. Residues 343-363 traverse the membrane as a helical segment; it reads VAVTMSFFAVLAMLSSTILAI. Over 364 to 373 the chain is Cytoplasmic; it reads YRIAVLLREY.

This sequence belongs to the Casparian strip membrane proteins (CASP) family. As to quaternary structure, homodimer and heterodimers.

The protein resides in the cell membrane. The protein is CASP-like protein UU6 of Physcomitrium patens (Spreading-leaved earth moss).